A 429-amino-acid polypeptide reads, in one-letter code: MKERTIQPVNNGLNGNITIPGDKSISHRAVMFGAIAEGKTTIKGFLPGADCLSTISCFKEMGVDIVQNGDEVTVVGKGLEGLQEPKAVLDVGNSGTTIRLMSGILANTPFFSCVQGDASIAKRPMKRVTNPLKQMGANIDGREEGTFTPLTIRGGDLKAIEYTSPVASAQVKSAILLAGLRAEGVTAVTEPHISRDHTERMLEAFGVKVTREGKTVKLAGGQKLTATDVQVPGDVSSAAFFLVAGAIIPNSKLVLQNVGMNPTRTGIIDVLEKMGATFTVEPINEGASEPAANITIETSSLKGIEIGGDIIPRLIDEIPVIALAATQAEGITVIKDAHELKVKETNRIDTVVAELTKLGARIEATDDGMIIYGKSALKGNTVNSYGDHRIGMMLAIAGCIAKGKTTIEDAEAVGVSYPTFFEELQKLAK.

Residues K23, S24, and R28 each contribute to the 3-phosphoshikimate site. K23 is a phosphoenolpyruvate binding site. Residues G95 and R123 each contribute to the phosphoenolpyruvate site. Residues S168, Q170, D316, and K343 each coordinate 3-phosphoshikimate. Residue Q170 coordinates phosphoenolpyruvate. Catalysis depends on D316, which acts as the Proton acceptor. Phosphoenolpyruvate-binding residues include R347 and R389.

Belongs to the EPSP synthase family. Monomer.

Its subcellular location is the cytoplasm. The catalysed reaction is 3-phosphoshikimate + phosphoenolpyruvate = 5-O-(1-carboxyvinyl)-3-phosphoshikimate + phosphate. It participates in metabolic intermediate biosynthesis; chorismate biosynthesis; chorismate from D-erythrose 4-phosphate and phosphoenolpyruvate: step 6/7. Its function is as follows. Catalyzes the transfer of the enolpyruvyl moiety of phosphoenolpyruvate (PEP) to the 5-hydroxyl of shikimate-3-phosphate (S3P) to produce enolpyruvyl shikimate-3-phosphate and inorganic phosphate. This chain is 3-phosphoshikimate 1-carboxyvinyltransferase, found in Bacillus cereus (strain ATCC 10987 / NRS 248).